The primary structure comprises 155 residues: Large ribosomal subunit protein uL15 (155 aa).

Over residues 1–13 the composition is skewed to basic and acidic residues; that stretch reads MKLNELRDAEGAT. The tract at residues 1–41 is disordered; sequence MKLNELRDAEGATKARKRVGRGIGSGSGKTGGRGVKGQKSR. The span at 21–35 shows a compositional bias: gly residues; that stretch reads RGIGSGSGKTGGRGV.

It belongs to the universal ribosomal protein uL15 family. In terms of assembly, part of the 50S ribosomal subunit.

In terms of biological role, binds to the 23S rRNA. This Chelativorans sp. (strain BNC1) protein is Large ribosomal subunit protein uL15.